The chain runs to 505 residues: Deoxyguanosinetriphosphate triphosphohydrolase (505 aa).

The HD domain occupies 66–273; that stretch reads RLTHSMEVQQ…MEAADDISYC (208 aa).

Belongs to the dGTPase family. Type 1 subfamily. As to quaternary structure, homotetramer. The cofactor is Mg(2+).

The catalysed reaction is dGTP + H2O = 2'-deoxyguanosine + triphosphate + H(+). DGTPase preferentially hydrolyzes dGTP over the other canonical NTPs. This Salmonella arizonae (strain ATCC BAA-731 / CDC346-86 / RSK2980) protein is Deoxyguanosinetriphosphate triphosphohydrolase.